The sequence spans 249 residues: Low affinity immunoglobulin gamma Fc region receptor III-A (249 aa).

The N-terminal stretch at Met-1 to Ala-20 is a signal peptide. Over Gly-21–Gln-203 the chain is Extracellular. Ig-like C2-type domains lie at Leu-22–Glu-102 and Glu-119–Ser-188. 2 disulfide bridges follow: Cys-46/Cys-88 and Cys-127/Cys-171. N-linked (GlcNAc...) asparagine glycans are attached at residues Asn-62, Asn-164, and Asn-179. The helical transmembrane segment at Ile-204–Val-224 threads the bilayer. The Cytoplasmic segment spans residues Arg-225 to Lys-249. A Phosphotyrosine modification is found at Tyr-235.

As to quaternary structure, forms a heterooligomeric complex with ITAM-containing signaling subunits FCER1G. Interacts (via transmembrane domain) with signaling subunits; this interaction is a prerequisite for receptor complex expression on the cell surface and intracellular signal transduction. Binds the Fc region of antigen-complexed IgG. N-glycosylated. Post-translationally, phosphorylated following receptor ligation. In terms of tissue distribution, detected on myeloid cells, peripheral blood monocytes, splenic and bone marrow dendritic cells, and thioglycollate-elicited macrophages and neutrophils but absent from lymphoid populations with no expression observed on T cells, B cells, NK cells or other granulocytes (at protein level). Expressed in peripheral blood leukocytes, spleen, liver, thymus and small intestine. Expressed in splenic dendritic cell subsets (at protein level).

The protein localises to the cell membrane. In terms of biological role, receptor for the invariable Fc fragment of immunoglobulin gamma (IgG). Binds with intermediate affinity to both IgG2a and IgG2b. Can bind to IgG2a and IgG2b monomers. Does not display binding to IgG1 or IgG3. Recognizes neutralizing virus-specific IgGs displayed on the cell surface of infected cells and triggers antibody-dependent cellular cytotoxicity (ADCC). Confers protection to lethal influenza virus infection. On splenic dendritic cells, uptakes antigen immune complexes and efficiently divert them into MHC class I and II antigen presentation pathways to provide for superior priming of CD4-positive and CD8-positive T cell immune responses. Mediates neutrophil activation by IgG complexes redundantly with FCGR2A. Plays a role in promoting bone resorption by enhancing osteoclast differentiation following binding to IgG2a. Also acts as a receptor for the Fc region of immunoglobulin epsilon (IgE). Binds with low affinity to both the a and b allotypes of IgE. Has also been shown to bind to IgE allotype a only but not to allotype b. Binds aggregated IgE but not the monomeric form and bound monomeric IgG is readily displaced by IgE complexes. Binding to IgE promotes macrophage-mediated phagocytosis, antigen presentation to T cells, production of pro-inflammatory cytokines and the late phase of cutaneous allergic reactions. Mediates enhanced ADCC in response to afucosylated IgGs. This chain is Low affinity immunoglobulin gamma Fc region receptor III-A, found in Mus musculus (Mouse).